A 286-amino-acid chain; its full sequence is 33 kDa chaperonin (286 aa).

Disulfide bonds link cysteine 236-cysteine 238 and cysteine 264-cysteine 267.

It belongs to the HSP33 family. Under oxidizing conditions two disulfide bonds are formed involving the reactive cysteines. Under reducing conditions zinc is bound to the reactive cysteines and the protein is inactive.

The protein resides in the cytoplasm. Functionally, redox regulated molecular chaperone. Protects both thermally unfolding and oxidatively damaged proteins from irreversible aggregation. Plays an important role in the bacterial defense system toward oxidative stress. The chain is 33 kDa chaperonin from Carboxydothermus hydrogenoformans (strain ATCC BAA-161 / DSM 6008 / Z-2901).